Reading from the N-terminus, the 553-residue chain is Putative transport protein CKO_00031 (553 aa).

The next 5 membrane-spanning stretches (helical) occupy residues 4–24, 28–48, 65–85, 95–115, and 158–178; these read IALT…IGNI, GVGF…HFVD, FGLI…FFAS, LFAI…HKIF, and MSYA…MWLM. 2 RCK C-terminal domains span residues 192–276 and 279–361; these read QHED…VIGQ and DTSL…VVGN. A run of 6 helical transmembrane segments spans residues 371–391, 393–413, 437–457, 464–484, 493–513, and 533–553; these read MLPV…PLFV, GFPV…ALIL, LGIV…FIDT, LSWI…VGLL, YLTL…LAFA, and LVMF…WGLG.

This sequence belongs to the AAE transporter (TC 2.A.81) family. YidE subfamily.

The protein localises to the cell membrane. This chain is Putative transport protein CKO_00031, found in Citrobacter koseri (strain ATCC BAA-895 / CDC 4225-83 / SGSC4696).